Here is a 260-residue protein sequence, read N- to C-terminus: Hemin import ATP-binding protein HmuV (260 aa).

The ABC transporter domain occupies 6-242; sequence LHADNLHYRA…VQLRACYQAD (237 aa). Residue 38–45 participates in ATP binding; it reads GPNGAGKS.

Belongs to the ABC transporter superfamily. Heme (hemin) importer (TC 3.A.1.14.5) family. In terms of assembly, the complex is composed of two ATP-binding proteins (HmuV), two transmembrane proteins (HmuU) and a solute-binding protein (HmuT).

It is found in the cell inner membrane. Part of the ABC transporter complex HmuTUV involved in hemin import. Responsible for energy coupling to the transport system. In Sodalis glossinidius (strain morsitans), this protein is Hemin import ATP-binding protein HmuV.